Reading from the N-terminus, the 344-residue chain is Endoplasmic reticulum junction formation protein lunapark-1 (344 aa).

Over 1–39 (MGNLFSRTKSPATELERVVLSIEDFKKRLQTISASNSST) the chain is Cytoplasmic. The chain crosses the membrane as a helical span at residues 40–60 (LYYYYMGVIIILSIAMAHTWL). At 61–68 (RFDDPTKT) the chain is on the lumenal side. A helical membrane pass occupies residues 69–89 (YVACALVFGATVIVLTGRYII). The Cytoplasmic segment spans residues 90 to 344 (NCFFAWRTNR…ADETAVVEKS (255 aa)). Residues 116–140 (DLVKETLKFKEAKEILDRYEEKTEA) are a coiled coil. 2 disordered regions span residues 136–155 (EKTEAGNTPTENSKLIHQQK) and 171–192 (QKRVETPVSQKPVPSKPGIAFD). Polar residues predominate over residues 140–155 (AGNTPTENSKLIHQQK). Residues 239–264 (CSICHTHNGMSVPAEYPFISFRCFEC) form a C4-type; plays a role in ER morphology zinc finger. Residues 275–344 (PHLPITRPPM…ADETAVVEKS (70 aa)) are disordered. Polar residues predominate over residues 312 to 326 (PNPSTDLTPSASQHG). A compositionally biased stretch (basic and acidic residues) spans 327–344 (SDSEPEKNADETAVVEKS).

This sequence belongs to the lunapark family.

It localises to the endoplasmic reticulum membrane. In terms of biological role, plays a role in tubular endoplasmic reticulum network formation and maintenance. May be involved in central nervous system development. Has a presynaptic role in neurotransmission. Likely to operate in synaptogenesis by regulating vesicular transport or localization. Required for correct localization of rab-3 and snb-1. The protein is Endoplasmic reticulum junction formation protein lunapark-1 of Caenorhabditis briggsae.